Reading from the N-terminus, the 259-residue chain is Transmembrane protein 81 (259 aa).

The N-terminal stretch at 1–18 is a signal peptide; that stretch reads MALSTLWLVLMLWTSLFS. Over 19 to 221 the chain is Extracellular; the sequence is DSQCSTLSQA…KVYSSSTIRN (203 aa). The Ig-like domain occupies 97-172; the sequence is GRRLVLDCLE…VLDTGKRRVK (76 aa). A disulfide bridge links cysteine 104 with cysteine 161. The helical transmembrane segment at 222–242 threads the bilayer; the sequence is IVIISVPLSFAIAVVIFIFLF. Over 243-259 the chain is Cytoplasmic; it reads CYSRRARRAAHLCQDNI.

In terms of assembly, forms a complex with izumo1 and spaca6 on spermatocyte cell membrane. The complex binds to oocyte protein bncr. As to expression, expressed in sperm.

The protein localises to the cell membrane. Essential fertilization factor required for male fertility. Part of a conserved trimeric sperm complex with the essential fertilization factors IZUMO1 and SPACA6 which bridges sperm and oocyte membranes during fertilization by binding to IZUMO1R/JUNO on the oocyte. The sequence is that of Transmembrane protein 81 from Danio rerio (Zebrafish).